The chain runs to 164 residues: Phosphopantetheine adenylyltransferase (164 aa).

Residue S9 coordinates substrate. Residues 9–10 (SF) and H17 each bind ATP. Residues K41, V78, and R92 each contribute to the substrate site. Residues 93 to 95 (GLR), E103, and 128 to 134 (SRPITAT) contribute to the ATP site.

This sequence belongs to the bacterial CoaD family. Homohexamer. Mg(2+) serves as cofactor.

It is found in the cytoplasm. The enzyme catalyses (R)-4'-phosphopantetheine + ATP + H(+) = 3'-dephospho-CoA + diphosphate. It participates in cofactor biosynthesis; coenzyme A biosynthesis; CoA from (R)-pantothenate: step 4/5. Its function is as follows. Reversibly transfers an adenylyl group from ATP to 4'-phosphopantetheine, yielding dephospho-CoA (dPCoA) and pyrophosphate. This Rhizobium leguminosarum bv. trifolii (strain WSM2304) protein is Phosphopantetheine adenylyltransferase.